Consider the following 548-residue polypeptide: Glucan endo-1,3-beta-glucosidase (548 aa).

The tat-type signal signal peptide spans 1–36 (MPHDRKNSSRRAWAALCAAVLAVSGALVGVAAPASA). Residues 37-430 (VPATIPLTIT…AGTGALRIGS (394 aa)) are possesses beta-glucanase activity, but is unable to lyse viable cells. Residues 38 to 396 (PATIPLTITN…PQAAYIKLDP (359 aa)) enclose the GH64 domain. Glutamate 153 (proton donor) is an active-site residue. The active-site Proton acceptor is the aspartate 169. The Ricin B-type lectin domain maps to 422 to 548 (GTGALRIGST…NQTEAQRWTL (127 aa)). The tract at residues 472–548 (GKCLDVARSG…NQTEAQRWTL (77 aa)) is essential for the lytic activity, but not for the beta-glucanase function.

This sequence belongs to the glycosyl hydrolase 64 family. Predicted to be exported by the Tat system. The position of the signal peptide cleavage has been experimentally proven.

The protein localises to the periplasm. The enzyme catalyses Hydrolysis of (1-&gt;3)-beta-D-glucosidic linkages in (1-&gt;3)-beta-D-glucans.. Lysis of cellular walls containing beta-1,3-glucans. Implicated in the defense against fungal pathogens. In Cellulosimicrobium cellulans (Arthrobacter luteus), this protein is Glucan endo-1,3-beta-glucosidase.